We begin with the raw amino-acid sequence, 444 residues long: Transmembrane protein with metallophosphoesterase domain (444 aa).

5 consecutive transmembrane segments (helical) span residues 7-27 (LSLGAKAALAAGTVFVSMIVS), 43-63 (LFRLQLALFVNSLMLLGSIYI), 87-107 (MVVAAFLALAHSSFFTMIFLV), 114-134 (FSLVAYTCLGAYVIMLCFLCV), and 162-182 (LALRPALAVMVTTVLSVVGLL). A divalent metal cation contacts are provided by Asp-214, His-216, Asp-246, Asn-277, His-382, and His-384.

This sequence belongs to the metallophosphoesterase superfamily. LOC643853 family. A divalent metal cation is required as a cofactor.

Its subcellular location is the membrane. This chain is Transmembrane protein with metallophosphoesterase domain (TMPPE), found in Bos taurus (Bovine).